The primary structure comprises 265 residues: Type III pantothenate kinase (265 aa).

17 to 24 serves as a coordination point for ATP; that stretch reads DIGNTSIS. 114 to 117 contacts substrate; the sequence is GSDV. D116 serves as the catalytic Proton acceptor. Position 137 (D137) interacts with K(+). Residue T140 participates in ATP binding. T192 serves as a coordination point for substrate.

The protein belongs to the type III pantothenate kinase family. In terms of assembly, homodimer. The cofactor is NH4(+). Requires K(+) as cofactor.

The protein resides in the cytoplasm. It carries out the reaction (R)-pantothenate + ATP = (R)-4'-phosphopantothenate + ADP + H(+). Its pathway is cofactor biosynthesis; coenzyme A biosynthesis; CoA from (R)-pantothenate: step 1/5. In terms of biological role, catalyzes the phosphorylation of pantothenate (Pan), the first step in CoA biosynthesis. In Borrelia hermsii (strain HS1 / DAH), this protein is Type III pantothenate kinase.